The following is a 446-amino-acid chain: MENISDLWNSALKELEKKVSKPSYETWLKSTTAHNLKKDVLTITAPNEFARDWLESHYSELISETLYDLTGAKLAIRFIIPQSQAEEEIDLPPSKPNAAQDDSNHLPQSMLNPKYTFDTFVIGSGNRFAHAASLAVAEAPAKAYNPLFIYGGVGLGKTHLMHAIGHYVIEHNPNAKVVYLSSEKFTNEFINSIRDNKAVDFRNKYRNVDVLLIDDIQFLAGKEQTQEEFFHTFNALHEESKQIVISSDRPPKEIPTLEDRLRSRFEWGLITDITPPDLETRIAILRKKAKAEGLDIPNEVMLYIANQIDSNIRELEGALIRVVAYSSLINKDINADLAAEALKDIIPNSKPKIISIYDIQKAVGDVYQVKLEDFKAKKRTKSVAFPRQIAMYLSRELTDSSLPKIGEEFGGRDHTTVIHAHEKISKLLKTDTQLQKQVEEINDILK.

Residues 1–92 (MENISDLWNS…SQAEEEIDLP (92 aa)) are domain I, interacts with DnaA modulators. Residues 93–109 (PSKPNAAQDDSNHLPQS) are domain II. The domain III, AAA+ region stretch occupies residues 110–326 (MLNPKYTFDT…GALIRVVAYS (217 aa)). ATP contacts are provided by Gly-154, Gly-156, Lys-157, and Thr-158. The tract at residues 327–446 (SLINKDINAD…QVEEINDILK (120 aa)) is domain IV, binds dsDNA.

It belongs to the DnaA family. As to quaternary structure, oligomerizes as a right-handed, spiral filament on DNA at oriC.

The protein resides in the cytoplasm. In terms of biological role, plays an essential role in the initiation and regulation of chromosomal replication. ATP-DnaA binds to the origin of replication (oriC) to initiate formation of the DNA replication initiation complex once per cell cycle. Binds the DnaA box (a 9 base pair repeat at the origin) and separates the double-stranded (ds)DNA. Forms a right-handed helical filament on oriC DNA; dsDNA binds to the exterior of the filament while single-stranded (ss)DNA is stabiized in the filament's interior. The ATP-DnaA-oriC complex binds and stabilizes one strand of the AT-rich DNA unwinding element (DUE), permitting loading of DNA polymerase. After initiation quickly degrades to an ADP-DnaA complex that is not apt for DNA replication. Binds acidic phospholipids. The polypeptide is Chromosomal replication initiator protein DnaA (Bacillus cereus (strain 03BB102)).